Here is a 51-residue protein sequence, read N- to C-terminus: DNA-binding protein (51 aa).

Positions 1 to 51 are disordered; that stretch reads MVYRRRRSRSADGTYTRRRRSSGYRRRPGRPRTYRRSRSATRRSGYRRRRY. 2 repeat units span residues 5-10 and 17-22. The segment at 5–22 is 2 X 6 AA repeats of R-R-R-R-S-S; that stretch reads RRRSRSADGTYTRRRRSS. Residues 16-51 show a composition bias toward basic residues; it reads TRRRRSSGYRRRPGRPRTYRRSRSATRRSGYRRRRY.

Post-translationally, probably phosphorylated in infected cells.

It is found in the virion. Thought to be responsible for DNA condensation during packaging of the nucleocapsids. The sequence is that of DNA-binding protein (P6.5) from Orgyia pseudotsugata (Douglas-fir tussock moth).